Reading from the N-terminus, the 373-residue chain is Anhydro-N-acetylmuramic acid kinase (373 aa).

13-20 (GTSMDGID) is an ATP binding site.

The protein belongs to the anhydro-N-acetylmuramic acid kinase family.

The catalysed reaction is 1,6-anhydro-N-acetyl-beta-muramate + ATP + H2O = N-acetyl-D-muramate 6-phosphate + ADP + H(+). It participates in amino-sugar metabolism; 1,6-anhydro-N-acetylmuramate degradation. Its pathway is cell wall biogenesis; peptidoglycan recycling. In terms of biological role, catalyzes the specific phosphorylation of 1,6-anhydro-N-acetylmuramic acid (anhMurNAc) with the simultaneous cleavage of the 1,6-anhydro ring, generating MurNAc-6-P. Is required for the utilization of anhMurNAc either imported from the medium or derived from its own cell wall murein, and thus plays a role in cell wall recycling. In Brucella suis (strain ATCC 23445 / NCTC 10510), this protein is Anhydro-N-acetylmuramic acid kinase.